The following is a 145-amino-acid chain: 3-hydroxyacyl-[acyl-carrier-protein] dehydratase FabZ (145 aa).

H48 is a catalytic residue.

Belongs to the thioester dehydratase family. FabZ subfamily.

It is found in the cytoplasm. The enzyme catalyses a (3R)-hydroxyacyl-[ACP] = a (2E)-enoyl-[ACP] + H2O. Its function is as follows. Involved in unsaturated fatty acids biosynthesis. Catalyzes the dehydration of short chain beta-hydroxyacyl-ACPs and long chain saturated and unsaturated beta-hydroxyacyl-ACPs. The protein is 3-hydroxyacyl-[acyl-carrier-protein] dehydratase FabZ of Stutzerimonas stutzeri (strain A1501) (Pseudomonas stutzeri).